The chain runs to 291 residues: Aspartate carbamoyltransferase catalytic subunit (291 aa).

The carbamoyl phosphate site is built by arginine 47 and threonine 48. Residue lysine 75 participates in L-aspartate binding. Arginine 97, histidine 126, and glutamine 129 together coordinate carbamoyl phosphate. Residues arginine 159 and arginine 213 each coordinate L-aspartate. Carbamoyl phosphate-binding residues include glycine 251 and proline 252.

This sequence belongs to the aspartate/ornithine carbamoyltransferase superfamily. ATCase family. In terms of assembly, heterododecamer (2C3:3R2) of six catalytic PyrB chains organized as two trimers (C3), and six regulatory PyrI chains organized as three dimers (R2).

It carries out the reaction carbamoyl phosphate + L-aspartate = N-carbamoyl-L-aspartate + phosphate + H(+). It participates in pyrimidine metabolism; UMP biosynthesis via de novo pathway; (S)-dihydroorotate from bicarbonate: step 2/3. Its function is as follows. Catalyzes the condensation of carbamoyl phosphate and aspartate to form carbamoyl aspartate and inorganic phosphate, the committed step in the de novo pyrimidine nucleotide biosynthesis pathway. The polypeptide is Aspartate carbamoyltransferase catalytic subunit (Aquifex aeolicus (strain VF5)).